The chain runs to 142 residues: Large ribosomal subunit protein uL13 (142 aa).

Belongs to the universal ribosomal protein uL13 family. As to quaternary structure, part of the 50S ribosomal subunit.

This protein is one of the early assembly proteins of the 50S ribosomal subunit, although it is not seen to bind rRNA by itself. It is important during the early stages of 50S assembly. The chain is Large ribosomal subunit protein uL13 from Psychrobacter arcticus (strain DSM 17307 / VKM B-2377 / 273-4).